Reading from the N-terminus, the 612-residue chain is Putative zinc metalloproteinase C607.06c (612 aa).

Histidine 303 contacts Zn(2+). Residue glutamate 304 is part of the active site. Histidine 307 and histidine 313 together coordinate Zn(2+). One can recognise a Jacalin-type lectin domain in the interval valine 477–lysine 612.

The protein belongs to the peptidase M10B family. Zn(2+) serves as cofactor.

The chain is Putative zinc metalloproteinase C607.06c from Schizosaccharomyces pombe (strain 972 / ATCC 24843) (Fission yeast).